A 610-amino-acid chain; its full sequence is UvrABC system protein C (610 aa).

Positions 12-91 constitute a GIY-YIG domain; the sequence is TSPGVYLYKN…IKQKKPRFNI (80 aa). Positions 202–237 constitute a UVR domain; the sequence is SDLKQSLTARMNKAAEGMQFELAAKYRDLITTVEDL.

It belongs to the UvrC family. As to quaternary structure, interacts with UvrB in an incision complex.

The protein localises to the cytoplasm. Functionally, the UvrABC repair system catalyzes the recognition and processing of DNA lesions. UvrC both incises the 5' and 3' sides of the lesion. The N-terminal half is responsible for the 3' incision and the C-terminal half is responsible for the 5' incision. This Koribacter versatilis (strain Ellin345) protein is UvrABC system protein C.